A 260-amino-acid chain; its full sequence is Coiled-coil domain-containing protein 127 (260 aa).

The stretch at 76 to 139 (AVISEHRRAV…EKSRLQPLRN (64 aa)) forms a coiled coil.

This is Coiled-coil domain-containing protein 127 (Ccdc127) from Mus musculus (Mouse).